We begin with the raw amino-acid sequence, 1542 residues long: ABC multidrug transporter AFR1 (1542 aa).

2 disordered regions span residues 1–84 and 118–141; these read MSAA…LPAD and SQQSQHELHRPTTRHSIRSSFSRK. Polar residues predominate over residues 18 to 41; sequence TATTQNPSGLANSQVTSDPVPSAT. The segment covering 60-69 has biased composition (basic and acidic residues); that stretch reads DKSVDAEKVE. N-linked (GlcNAc...) asparagine glycans are attached at residues Asn-207 and Asn-397. In terms of domain architecture, ABC transporter 1 spans 221 to 473; that stretch reads LKVLGIFGVN…MIGLGYRDLP (253 aa). 5 helical membrane-spanning segments follow: residues 584 to 604, 618 to 638, 669 to 689, 694 to 714, and 726 to 746; these read FGISTGYATSIIIALIVGSVY, GGLLFLGLLFNALTSFSELPS, VPYNASVIFLFSIVLYFMGGL, GAFFIFYLFVFLTFMVMSAFF, and VAARLASVLISFMVTYTGYMI. N-linked (GlcNAc...) asparagine glycosylation occurs at Asn-822. Residues 844 to 864 form a helical membrane-spanning segment; the sequence is FGILVGFFAFFMFLQMMFIEY. Residues 917–1159 enclose the ABC transporter 2 domain; sequence FTWEGLNYTV…VLIDYLERNG (243 aa). The N-linked (GlcNAc...) asparagine glycan is linked to Asn-923. Position 953 to 960 (953 to 960) interacts with ATP; that stretch reads GASGAGKT. A run of 6 helical transmembrane segments spans residues 1253-1273, 1284-1304, 1335-1355, 1365-1385, 1390-1410, and 1516-1536; these read WTRLFAHLAIGLIVTLTFLQL, VFAIFFATVLPALILAQIEPQ, MPYSLGCAVSFFLLLYYGVGF, FFLMILVTEIYAVTLGQAVAA, ILIAALFNPFLLVLFSIFCGV, and FGIFICYVVFNILVLLIAARF.

The protein belongs to the ABC transporter superfamily. ABCG family. PDR (TC 3.A.1.205) subfamily.

It localises to the cell membrane. It carries out the reaction itraconazole(in) + ATP + H2O = itraconazole(out) + ADP + phosphate + H(+). It catalyses the reaction voriconazole(in) + ATP + H2O = voriconazole(out) + ADP + phosphate + H(+). The enzyme catalyses fluconazole(in) + ATP + H2O = fluconazole(out) + ADP + phosphate + H(+). Major pleiotropic ABC efflux transporter that confers resistance to structurally and functionally unrelated compounds including azoles such as fluconazole (FLC), itraconazole (ITC), posaconazole (POS), and voriconazole (VRC). Is also able to efflux the eukaryote protein synthesis inhibitor cycloheximide (CHX). The sequence is that of ABC multidrug transporter AFR1 from Cryptococcus deuterogattii (strain R265) (Cryptococcus gattii VGII (strain R265)).